A 195-amino-acid polypeptide reads, in one-letter code: MYLINQNGWIEVICGSMFSGKSEELIRRVRRTQFAKQHAIVFKPCIDNRYSEEDVVSHNGLKVKAVPVSASKDIFEHITEELDVIAIDEVQFFDGDIVEVVQVLANRGYRVIVAGLDQDFRGLPFGQVPQLMAIAEHVTKLQAVCSVCGSPASRTQRLIDGEPAAFDDPIILVGASESYEPRCRHCHAVPANKDK.

Residues Gly15–Ser22 and Asp88–Gln91 contribute to the ATP site. Glu89 functions as the Proton acceptor in the catalytic mechanism. Residue Phe120 participates in substrate binding. Zn(2+) is bound by residues Cys145 and Cys148. Residues Ile170–Gly174 and Tyr179 contribute to the substrate site. 2 residues coordinate Zn(2+): Cys183 and Cys186.

Belongs to the thymidine kinase family. Homotetramer.

The protein resides in the cytoplasm. The catalysed reaction is thymidine + ATP = dTMP + ADP + H(+). This is Thymidine kinase from Bacillus cereus (strain ATCC 14579 / DSM 31 / CCUG 7414 / JCM 2152 / NBRC 15305 / NCIMB 9373 / NCTC 2599 / NRRL B-3711).